Here is a 488-residue protein sequence, read N- to C-terminus: MGKFLATLILFFQFCPLILSDYSPSCCTLTIGVSSYHSKPCNPAQPVCSWTLDLLALSADQALQPPCPNLVSYSSYHATYSLYLFPHWIKKPNRNGGGYYSASYSDPCSLKCPYLGCQSWTCPYTGAVSSPYWKFQQDVNFTQEVSRLNINLHFSKCGFPFSLLVDAPGYDPIWFLNTEPSQLPPTAPPLLPHSNLDHILEPSIPWKSKLLTLVQLTLQSTNYTCIVCIDRASLSTWHVLYSPNVSVPSSSSTPLLYPSLALPAPHLTLPFNWTHCFDPQIQAIVSSPCHNSLILPPFSLSPVPTLGSRSRRAVPVAVWLVSALAMGAGMAGGITGSMSLASGRSLLHEVDKDISQLTQAIVKNHKNLLKIAQYAAQNRRGLDLLFWEQGGLCKALQEQCCFLNITNSHVSILQERPPLENRVLTGWGLNWDLGLSQWAREALQTGITLVALLLLVILAGPCILRQLRHLPSRVRYPHYSLINPESSL.

Residues 1-20 form the signal peptide; that stretch reads MGKFLATLILFFQFCPLILS. The Extracellular segment spans residues 21–442; sequence DYSPSCCTLT…LGLSQWAREA (422 aa). Residues Asn140 and Asn222 are each glycosylated (N-linked (GlcNAc...) asparagine; by host). The CXXC motif lies at 225–228; sequence CIVC. Cystine bridges form between Cys225–Cys228, Cys225–Cys401, and Cys393–Cys400. Residues Asn244 and Asn272 are each glycosylated (N-linked (GlcNAc...) asparagine; by host). The segment at 313 to 333 is fusion peptide; that stretch reads AVPVAVWLVSALAMGAGMAGG. Coiled-coil stretches lie at residues 341–387 and 397–429; these read ASGR…LLFW and QEQC…GWGL. Residues 376 to 392 form an immunosuppression region; sequence AQNRRGLDLLFWEQGGL. A CX6CC motif is present at residues 393-401; that stretch reads CKALQEQCC. Residue Asn404 is glycosylated (N-linked (GlcNAc...) asparagine; by host). Residues 443–463 form a helical membrane-spanning segment; it reads LQTGITLVALLLLVILAGPCI. Residue Cys462 is the site of S-palmitoyl cysteine; by host attachment. Topologically, residues 464–488 are cytoplasmic; sequence LRQLRHLPSRVRYPHYSLINPESSL.

The mature envelope protein (Env) consists of a trimer of SU-TM heterodimers attached by a labile interchain disulfide bond. Post-translationally, specific enzymatic cleavages in vivo yield mature proteins. Envelope glycoproteins are synthesized as an inactive precursor that is N-glycosylated and processed likely by host cell furin or by a furin-like protease in the Golgi to yield the mature SU and TM proteins. The cleavage site between SU and TM requires the minimal sequence [KR]-X-[KR]-R. The CXXC motif is highly conserved across a broad range of retroviral envelope proteins. It is thought to participate in the formation of a labile disulfide bond possibly with the CX6CC motif present in the transmembrane protein. Isomerization of the intersubunit disulfide bond to an SU intrachain disulfide bond is thought to occur upon receptor recognition in order to allow membrane fusion. In terms of processing, the transmembrane protein is palmitoylated.

It is found in the virion membrane. Its subcellular location is the host cell membrane. The surface protein (SU) attaches the virus to the host cell by binding to its receptor. This interaction triggers the refolding of the transmembrane protein (TM) and is thought to activate its fusogenic potential by unmasking its fusion peptide. Fusion occurs at the host cell plasma membrane. Its function is as follows. The transmembrane protein (TM) acts as a class I viral fusion protein. Under the current model, the protein has at least 3 conformational states: pre-fusion native state, pre-hairpin intermediate state, and post-fusion hairpin state. During viral and target cell membrane fusion, the coiled coil regions (heptad repeats) assume a trimer-of-hairpins structure, positioning the fusion peptide in close proximity to the C-terminal region of the ectodomain. The formation of this structure appears to drive apposition and subsequent fusion of viral and target cell membranes. Membranes fusion leads to delivery of the nucleocapsid into the cytoplasm. The protein is Envelope glycoprotein gp62 (env) of Human T-cell leukemia virus 1 (isolate Zaire EL subtype B) (HTLV-1).